Reading from the N-terminus, the 531-residue chain is MTKYIIITGGVLSSVGKGTVAASIGLLLKNRGYKITMVKVDPYLNVDAGTMNPYMHGEVFVTDDGAETDLDLGHYERFVGINMYSYNNITAGKVYFEVIKNERQGKYLGQTVQIIPHVTDQIKSMIRYASNMANADITIVEIGGTVGDIEGLPFLEAVRQLKLEEEEGNVVFVHVALVEFLKVTEEIKTKPLQHSVQELRRIGIQPDIIVARSVVPLDEETKKKIALFTNVKPEYIFSNYDVNMTYEVPLILEKQGLASKILSKLNLPDNQPNLSEWIRFIDNLKTADKEVKIALVGKYTKLKDSYISIKEAIYHAAAKLHIKPVLVWIESTDIENSKEAIDKLKSVDGIIVLPGFGSRGVEGKILAIKYARENNVPFLGICYGMQLAVVEFARNVLGLEKAHTTEVDPNTPHPVITLLDEQKKVVQIGGTMRLGSQKVIVKEGTLAYRIYGNIEVYERHRHRYEVNPEYVDLLQKGGLVISGVSENGLVEMIELKNHKFFLGLQGHPEYKSRPLAPSPVFIGFLRAAAGV.

Residues 1 to 267 (MTKYIIITGG…ASKILSKLNL (267 aa)) are amidoligase domain. S13 serves as a coordination point for CTP. Residue S13 coordinates UTP. Residue 14–19 (SVGKGT) participates in ATP binding. Residue Y54 participates in L-glutamine binding. An ATP-binding site is contributed by D71. Mg(2+) contacts are provided by D71 and E141. CTP is bound by residues 148-150 (DIE), 188-193 (KTKPLQ), and K224. UTP-binding positions include 188–193 (KTKPLQ) and K224. The Glutamine amidotransferase type-1 domain maps to 292-531 (KIALVGKYTK…IGFLRAAAGV (240 aa)). G355 serves as a coordination point for L-glutamine. Catalysis depends on C382, which acts as the Nucleophile; for glutamine hydrolysis. Residues 383-386 (YGMQ), E406, and R463 contribute to the L-glutamine site. Active-site residues include H507 and E509.

It belongs to the CTP synthase family. In terms of assembly, homotetramer.

It carries out the reaction UTP + L-glutamine + ATP + H2O = CTP + L-glutamate + ADP + phosphate + 2 H(+). The enzyme catalyses L-glutamine + H2O = L-glutamate + NH4(+). The catalysed reaction is UTP + NH4(+) + ATP = CTP + ADP + phosphate + 2 H(+). Its pathway is pyrimidine metabolism; CTP biosynthesis via de novo pathway; CTP from UDP: step 2/2. Allosterically activated by GTP, when glutamine is the substrate; GTP has no effect on the reaction when ammonia is the substrate. The allosteric effector GTP functions by stabilizing the protein conformation that binds the tetrahedral intermediate(s) formed during glutamine hydrolysis. Inhibited by the product CTP, via allosteric rather than competitive inhibition. Its function is as follows. Catalyzes the ATP-dependent amination of UTP to CTP with either L-glutamine or ammonia as the source of nitrogen. Regulates intracellular CTP levels through interactions with the four ribonucleotide triphosphates. The sequence is that of CTP synthase from Sulfurisphaera tokodaii (strain DSM 16993 / JCM 10545 / NBRC 100140 / 7) (Sulfolobus tokodaii).